The sequence spans 150 residues: Transcriptional repressor NrdR (150 aa).

The segment at 3–34 (CPFCAFADSKVVDSRPDKGGSTIRRRRECESC) is a zinc-finger region. The ATP-cone domain maps to 49 to 139 (PLVIKKDGRR…VYRSFKDITE (91 aa)).

The protein belongs to the NrdR family. It depends on Zn(2+) as a cofactor.

Negatively regulates transcription of bacterial ribonucleotide reductase nrd genes and operons by binding to NrdR-boxes. This Geotalea uraniireducens (strain Rf4) (Geobacter uraniireducens) protein is Transcriptional repressor NrdR.